Consider the following 96-residue polypeptide: Alpha-elapitoxin-Al2b (96 aa).

A signal peptide spans Met1–Gly21. 5 disulfide bridges follow: Cys24/Cys41, Cys34/Cys62, Cys47/Cys51, Cys66/Cys77, and Cys78/Cys83.

The protein belongs to the three-finger toxin family. Long-chain subfamily. Type II alpha-neurotoxin sub-subfamily. In terms of tissue distribution, expressed by the venom gland.

The protein localises to the secreted. Functionally, potent long-chain postsynaptic neurotoxin. Pseudo-irreversibly inhibits the nicotinic acetylcholine receptor through competitive antagonism. The polypeptide is Alpha-elapitoxin-Al2b (Austrelaps labialis (Pygmy copperhead)).